We begin with the raw amino-acid sequence, 1126 residues long: Translation initiation factor IF-2 (1126 aa).

The disordered stretch occupies residues 63 to 519 (LSINKPSIKK…TTRQRQKRRA (457 aa)). The span at 70–83 (IKKDNFKQNKEDKS) shows a compositional bias: basic and acidic residues. Residues 93–111 (PLKNNSNKKPLLIKPLNKP) show a composition bias toward low complexity. Over residues 116 to 151 (KISNQLQNPNKPNIVNSSQSRANLTNTNSKPSQNFN) the composition is skewed to polar residues. Residues 161–171 (TPPPIKSPAKP) are compositionally biased toward pro residues. The segment covering 181 to 195 (NINNNVKSSESSQNI) has biased composition (polar residues). 2 stretches are compositionally biased toward low complexity: residues 211–224 (NTNK…NNRK) and 240–252 (IINP…NKQN). Positions 254 to 264 (AFKQTASNRPG) are enriched in polar residues. Low complexity-rich tracts occupy residues 291-315 (NRQG…GLRN) and 327-349 (NRQG…NRPG). Positions 429-443 (GKTDWDDSAKLEALR) are enriched in basic and acidic residues. Residues 501–517 (KQFKKKKKETTRQRQKR) are compositionally biased toward basic residues. In terms of domain architecture, tr-type G spans 618–790 (RRPPVITVMG…ILLVSDVEDL (173 aa)). Residues 627–634 (GHVDHGKT) are G1. 627-634 (GHVDHGKT) is a GTP binding site. The segment at 652 to 656 (GITQH) is G2. The segment at 677 to 680 (DTPG) is G3. Residues 677 to 681 (DTPGH) and 731 to 734 (NKID) contribute to the GTP site. A G4 region spans residues 731 to 734 (NKID). The segment at 767–769 (SAI) is G5.

It belongs to the TRAFAC class translation factor GTPase superfamily. Classic translation factor GTPase family. IF-2 subfamily.

Its subcellular location is the cytoplasm. Its function is as follows. One of the essential components for the initiation of protein synthesis. Protects formylmethionyl-tRNA from spontaneous hydrolysis and promotes its binding to the 30S ribosomal subunits. Also involved in the hydrolysis of GTP during the formation of the 70S ribosomal complex. The polypeptide is Translation initiation factor IF-2 (Prochlorococcus marinus (strain AS9601)).